The sequence spans 618 residues: uncharacterized protein (618 aa).

The segment at residues 18–47 (SCQRCRQRKIKCDRLHPCFQCVKSNSQCFY) is a DNA-binding region (zn(2)-C6 fungal-type). The residue at position 598 (Ser-598) is a Phosphoserine.

Its subcellular location is the nucleus. This is an uncharacterized protein from Schizosaccharomyces pombe (strain 972 / ATCC 24843) (Fission yeast).